Here is a 53-residue protein sequence, read N- to C-terminus: Small polypeptide DEVIL 16 (53 aa).

N6 is a glycosylation site (N-linked (GlcNAc...) asparagine). The required for DVL/RTFL small polypeptide activity stretch occupies residues 14-45 (TFGQKCSHVVKKQRAKFYILRRCIAMLVCWHD). Residues 30–46 (FYILRRCIAMLVCWHDQ) traverse the membrane as a helical segment.

The protein belongs to the DVL/RTFL small polypeptides family. Mostly expressed in stems, flower buds, flowers and seedling shoots, to a lesser extent, in roots and young cauline leaves, but not in mature rosette leaves. Barely observed in cotyledons and leaf primordia.

It is found in the cell membrane. In terms of biological role, small polypeptide acting as a regulatory molecule which coordinates cellular responses required for differentiation, growth and development, probably by restricting polar cell proliferation in lateral organs (e.g. leaves) and coordinating socket cell recruitment and differentiation at trichome sites. Regulates the positional cue and cell proliferation along the body axis. The sequence is that of Small polypeptide DEVIL 16 from Arabidopsis thaliana (Mouse-ear cress).